The following is a 255-amino-acid chain: Putative cysteine-rich repeat secretory protein 13 (255 aa).

Positions 1-21 are cleaved as a signal peptide; sequence MSSNILAMVAMQLLLIRIVSS. Gnk2-homologous domains are found at residues 28–136 and 142–252; these read YLNH…SVNT and YDSF…LYPF.

It belongs to the cysteine-rich repeat secretory protein family.

It is found in the secreted. The chain is Putative cysteine-rich repeat secretory protein 13 (CRRSP13) from Arabidopsis thaliana (Mouse-ear cress).